The sequence spans 209 residues: Ubiquitin-conjugating enzyme E2 S (209 aa).

A UBC core domain is found at 14–160 (QTIRQVMREL…ARMMTEIHAQ (147 aa)). Cysteine 98 acts as the Glycyl thioester intermediate in catalysis. Residues 164–209 (CGVGASGDAKDDDGPSTKKHAGLDKKLQDKKKEKLLKEKKRMLKRL) are disordered. The segment covering 171 to 199 (DAKDDDGPSTKKHAGLDKKLQDKKKEKLL) has biased composition (basic and acidic residues). The segment covering 200-209 (KEKKRMLKRL) has biased composition (basic residues).

The protein belongs to the ubiquitin-conjugating enzyme family.

The enzyme catalyses S-ubiquitinyl-[E1 ubiquitin-activating enzyme]-L-cysteine + [E2 ubiquitin-conjugating enzyme]-L-cysteine = [E1 ubiquitin-activating enzyme]-L-cysteine + S-ubiquitinyl-[E2 ubiquitin-conjugating enzyme]-L-cysteine.. It participates in protein modification; protein ubiquitination. Catalyzes the covalent attachment of ubiquitin to other proteins. Acts as an essential factor of the anaphase promoting complex/cyclosome (APC/C), a cell cycle-regulated ubiquitin ligase that controls progression through mitosis. Acts by specifically elongating polyubiquitin chains initiated by the E2 enzyme vih/UbcH10 on APC/C substrates, enhancing the degradation of APC/C substrates by the proteasome and promoting mitotic exit. The chain is Ubiquitin-conjugating enzyme E2 S from Drosophila yakuba (Fruit fly).